Here is a 301-residue protein sequence, read N- to C-terminus: Retinochrome (301 aa).

Topologically, residues M1 to E17 are extracellular. The chain crosses the membrane as a helical span at residues H18–L43. Residues A44–Y54 are Cytoplasmic-facing. A helical membrane pass occupies residues A55–S76. At S77–G94 the chain is on the extracellular side. A helical transmembrane segment spans residues F95–C120. Topologically, residues H121–Y132 are cytoplasmic. The chain crosses the membrane as a helical span at residues Y133–L153. Topologically, residues G154–S180 are extracellular. Residue N170 is glycosylated (N-linked (GlcNAc...) asparagine). Residues Y181–L208 traverse the membrane as a helical segment. Residues S209 to A230 are Cytoplasmic-facing. A helical membrane pass occupies residues L231 to L255. The Extracellular portion of the chain corresponds to T256–H264. Residues L265 to T289 traverse the membrane as a helical segment. N6-(retinylidene)lysine is present on K275. At A290 to P301 the chain is on the cytoplasmic side.

The protein belongs to the G-protein coupled receptor 1 family. Opsin subfamily. In terms of tissue distribution, mainly stored in myeloid bodies of the inner segments.

It is found in the membrane. Functionally, retinochrome is capable of acting as an effective catalyst in the light to convert various isomers of retinal into 11-cis, the form that is required by opsin to resynthesize rhodopsin. The polypeptide is Retinochrome (Todarodes pacificus (Japanese flying squid)).